Reading from the N-terminus, the 162-residue chain is MQIFPQTNELIWTIINFAVLLWGMHRFLYKPLLGAIQAREDEINANLKKAAEDRAEAERLRREFEAQIANAQREAQEIINKAVKNATAVKEQIEAEARARAAEILEQATQTIEREKAKAVAELRREVADLAVAVAGKVIEKSLDDAEHRRLADSFVTEVTKH.

The chain crosses the membrane as a helical span at residues 10–29 (LIWTIINFAVLLWGMHRFLY).

It belongs to the ATPase B chain family. F-type ATPases have 2 components, F(1) - the catalytic core - and F(0) - the membrane proton channel. F(1) has five subunits: alpha(3), beta(3), gamma(1), delta(1), epsilon(1). F(0) has three main subunits: a(1), b(2) and c(10-14). The alpha and beta chains form an alternating ring which encloses part of the gamma chain. F(1) is attached to F(0) by a central stalk formed by the gamma and epsilon chains, while a peripheral stalk is formed by the delta and b chains.

The protein resides in the cell membrane. In terms of biological role, f(1)F(0) ATP synthase produces ATP from ADP in the presence of a proton or sodium gradient. F-type ATPases consist of two structural domains, F(1) containing the extramembraneous catalytic core and F(0) containing the membrane proton channel, linked together by a central stalk and a peripheral stalk. During catalysis, ATP synthesis in the catalytic domain of F(1) is coupled via a rotary mechanism of the central stalk subunits to proton translocation. Component of the F(0) channel, it forms part of the peripheral stalk, linking F(1) to F(0). In Symbiobacterium thermophilum (strain DSM 24528 / JCM 14929 / IAM 14863 / T), this protein is ATP synthase subunit b.